The sequence spans 226 residues: PKHD-type hydroxylase Nwi_0701 (226 aa).

The region spanning 78–178 (KVLPPRFNRY…RLAAFFWTQS (101 aa)) is the Fe2OG dioxygenase domain. 3 residues coordinate Fe cation: His96, Asp98, and His159. Arg169 provides a ligand contact to 2-oxoglutarate.

It depends on Fe(2+) as a cofactor. L-ascorbate serves as cofactor.

This Nitrobacter winogradskyi (strain ATCC 25391 / DSM 10237 / CIP 104748 / NCIMB 11846 / Nb-255) protein is PKHD-type hydroxylase Nwi_0701.